Consider the following 239-residue polypeptide: Probable inner membrane transporter protein TsaS (239 aa).

Helical transmembrane passes span alanine 65–glycine 85, glycine 128–leucine 148, alanine 160–alanine 180, and alanine 186–glycine 206.

It belongs to the 4-toluene sulfonate uptake permease (TSUP) (TC 2.A.102) family. Part of a two-component transport system composed of TsaT and TsaS.

The protein resides in the cell inner membrane. In terms of biological role, involved in the uptake of p-toluenesulphonate (TSA). This Comamonas testosteroni (Pseudomonas testosteroni) protein is Probable inner membrane transporter protein TsaS (tsaS).